We begin with the raw amino-acid sequence, 363 residues long: Probable aminomethyltransferase (363 aa).

The protein belongs to the GcvT family. In terms of assembly, the glycine cleavage system is composed of four proteins: P, T, L and H.

It carries out the reaction N(6)-[(R)-S(8)-aminomethyldihydrolipoyl]-L-lysyl-[protein] + (6S)-5,6,7,8-tetrahydrofolate = N(6)-[(R)-dihydrolipoyl]-L-lysyl-[protein] + (6R)-5,10-methylene-5,6,7,8-tetrahydrofolate + NH4(+). In terms of biological role, the glycine cleavage system catalyzes the degradation of glycine. The polypeptide is Probable aminomethyltransferase (Halobacterium salinarum (strain ATCC 29341 / DSM 671 / R1)).